The sequence spans 288 residues: 33 kDa chaperonin (288 aa).

2 disulfides stabilise this stretch: C233-C235 and C267-C270.

This sequence belongs to the HSP33 family. Under oxidizing conditions two disulfide bonds are formed involving the reactive cysteines. Under reducing conditions zinc is bound to the reactive cysteines and the protein is inactive.

It localises to the cytoplasm. Redox regulated molecular chaperone. Protects both thermally unfolding and oxidatively damaged proteins from irreversible aggregation. Plays an important role in the bacterial defense system toward oxidative stress. The sequence is that of 33 kDa chaperonin from Actinobacillus succinogenes (strain ATCC 55618 / DSM 22257 / CCUG 43843 / 130Z).